We begin with the raw amino-acid sequence, 140 residues long: Cytochrome c-type biogenesis protein CcmE (140 aa).

Residues 1 to 7 (MKRKHKR) are Cytoplasmic-facing. The helical; Signal-anchor for type II membrane protein transmembrane segment at 8–28 (LLFVLASFCAAGCALLFILSE) threads the bilayer. Topologically, residues 29–140 (LRESVSFFYT…TIPKALPEPK (112 aa)) are periplasmic. Residues His121 and Tyr125 each contribute to the heme site.

It belongs to the CcmE/CycJ family.

The protein resides in the cell inner membrane. In terms of biological role, heme chaperone required for the biogenesis of c-type cytochromes. Transiently binds heme delivered by CcmC and transfers the heme to apo-cytochromes in a process facilitated by CcmF and CcmH. The sequence is that of Cytochrome c-type biogenesis protein CcmE from Anaplasma marginale (strain Florida).